A 396-amino-acid polypeptide reads, in one-letter code: Phosphoglycerate kinase (396 aa).

Residues 21-23 (DFN), R37, 60-63 (HLGR), R121, and R154 each bind substrate. ATP-binding positions include K205, G296, E327, and 353-356 (GGDS).

It belongs to the phosphoglycerate kinase family. As to quaternary structure, monomer.

Its subcellular location is the cytoplasm. The enzyme catalyses (2R)-3-phosphoglycerate + ATP = (2R)-3-phospho-glyceroyl phosphate + ADP. The protein operates within carbohydrate degradation; glycolysis; pyruvate from D-glyceraldehyde 3-phosphate: step 2/5. In Anaeromyxobacter dehalogenans (strain 2CP-1 / ATCC BAA-258), this protein is Phosphoglycerate kinase.